Consider the following 141-residue polypeptide: Nucleoside diphosphate kinase (141 aa).

6 residues coordinate ATP: Lys11, Phe59, Arg87, Thr93, Arg104, and Asn114. His117 (pros-phosphohistidine intermediate) is an active-site residue.

Belongs to the NDK family. In terms of assembly, homotetramer. It depends on Mg(2+) as a cofactor.

The protein localises to the cytoplasm. It carries out the reaction a 2'-deoxyribonucleoside 5'-diphosphate + ATP = a 2'-deoxyribonucleoside 5'-triphosphate + ADP. It catalyses the reaction a ribonucleoside 5'-diphosphate + ATP = a ribonucleoside 5'-triphosphate + ADP. Major role in the synthesis of nucleoside triphosphates other than ATP. The ATP gamma phosphate is transferred to the NDP beta phosphate via a ping-pong mechanism, using a phosphorylated active-site intermediate. This is Nucleoside diphosphate kinase from Vibrio vulnificus (strain CMCP6).